A 281-amino-acid polypeptide reads, in one-letter code: Ribosomal RNA small subunit methyltransferase I (281 aa).

It belongs to the methyltransferase superfamily. RsmI family.

It is found in the cytoplasm. It carries out the reaction cytidine(1402) in 16S rRNA + S-adenosyl-L-methionine = 2'-O-methylcytidine(1402) in 16S rRNA + S-adenosyl-L-homocysteine + H(+). Catalyzes the 2'-O-methylation of the ribose of cytidine 1402 (C1402) in 16S rRNA. The sequence is that of Ribosomal RNA small subunit methyltransferase I from Pasteurella multocida (strain Pm70).